The following is a 312-amino-acid chain: tRNA dimethylallyltransferase (312 aa).

17–24 (GPTASGKT) lines the ATP pocket. 19–24 (TASGKT) serves as a coordination point for substrate. Interaction with substrate tRNA regions lie at residues 42–45 (DSAL), 166–170 (QRLLR), and 247–252 (RCVGYR).

The protein belongs to the IPP transferase family. In terms of assembly, monomer. Mg(2+) is required as a cofactor.

The enzyme catalyses adenosine(37) in tRNA + dimethylallyl diphosphate = N(6)-dimethylallyladenosine(37) in tRNA + diphosphate. Its function is as follows. Catalyzes the transfer of a dimethylallyl group onto the adenine at position 37 in tRNAs that read codons beginning with uridine, leading to the formation of N6-(dimethylallyl)adenosine (i(6)A). The sequence is that of tRNA dimethylallyltransferase from Sodalis glossinidius (strain morsitans).